The sequence spans 340 residues: Dihydroorotate dehydrogenase (quinone) (340 aa).

FMN is bound by residues 61–65 (AGLDK) and Thr-85. Residue Lys-65 participates in substrate binding. 110–114 (NRMGF) contacts substrate. FMN-binding residues include Asn-138 and Asn-171. Residue Asn-171 participates in substrate binding. Ser-174 (nucleophile) is an active-site residue. Asn-176 serves as a coordination point for substrate. Residues Lys-216 and Thr-244 each contribute to the FMN site. 245–246 (NT) lines the substrate pocket. FMN is bound by residues Gly-267, Gly-296, and 317–318 (YS).

The protein belongs to the dihydroorotate dehydrogenase family. Type 2 subfamily. As to quaternary structure, monomer. It depends on FMN as a cofactor.

The protein resides in the cell membrane. It catalyses the reaction (S)-dihydroorotate + a quinone = orotate + a quinol. Its pathway is pyrimidine metabolism; UMP biosynthesis via de novo pathway; orotate from (S)-dihydroorotate (quinone route): step 1/1. Catalyzes the conversion of dihydroorotate to orotate with quinone as electron acceptor. The polypeptide is Dihydroorotate dehydrogenase (quinone) (Ectopseudomonas mendocina (strain ymp) (Pseudomonas mendocina)).